The following is a 1048-amino-acid chain: Ankyrin repeat domain-containing protein 27 (1048 aa).

Positions 1 to 372 (MALYDEDLLK…RQGSLSTKTP (372 aa)) are sufficient for GEF activity towards RAB21. Positions 233–371 (ASEDAAFNKI…IRQGSLSTKT (139 aa)) constitute a VPS9 domain. ANK repeat units lie at residues 396-426 (TPID…DKDA), 462-491 (RGQT…VVNA), 495-524 (HGST…STEV), 528-557 (NGNT…QACR), 564-593 (KGDT…PTAV), and 597-627 (LKET…RPRP). Residues 396 to 460 (TPIDCLFKHI…PSVVTPFSRD (65 aa)) are sufficient for interaction with VPS29. The interaction with RAB38 stretch occupies residues 451 to 600 (PSVVTPFSRD…TAVQNRLKET (150 aa)). An interaction with RAB32 region spans residues 451 to 729 (PSVVTPFSRD…CAPAQKLARI (279 aa)). Basic and acidic residues predominate over residues 618–627 (HLSSDRRPRP). A disordered region spans residues 618 to 650 (HLSSDRRPRPSEVPAQSPTRSVDSISQGSSTSS). Positions 638-650 (SVDSISQGSSTSS) are enriched in low complexity. The tract at residues 658 to 707 (FRQEEVKKDYREVEKLLRAVADGDLEMVRYLLEWTEDDLDDVEDAISTVD) is required for interaction with VAMP7. ANK repeat units lie at residues 668–698 (REVE…DLDD), 742–771 (DGFS…YSGA), 775–804 (SQAV…KPNK), 808–837 (SGNT…SINA), and 841–870 (KGNT…SVDI). The segment at 692–745 (TEDDLDDVEDAISTVDLEFCHPLCQCPKCAPAQKLARISANGLSVNVTNQDGFS) is sufficient for interaction with VPS29. Positions 949 to 962 (ERTSRETMGRDRSV) are enriched in basic and acidic residues. A disordered region spans residues 949–1019 (ERTSRETMGR…AAPGHRPMVR (71 aa)). Residues Ser961 and Ser969 each carry the phosphoserine modification. Residues 979–995 (TGKQSDLSDLSRYQTSE) show a composition bias toward polar residues. Positions 996–1006 (EGNKGLPERPV) are enriched in basic and acidic residues. A Phosphothreonine modification is found at Thr1022.

As to quaternary structure, interacts with RAB21 (GDP-bound form), VPS29, KIF5A, KIF5C, GOLGA4. Interacts with RAB32 (GTP-bound form), RAB38 (GTP-bound form), VAMP7. Interacts with low affinity with RAB5. ANKRD27:RAB32 heterodimers can homodimerize to form tetramers. Can interact with RAB38 or RAB32, VPS29 and VAMP7 simultaneously. A decreased interaction with RAB32 seen in the presence of SGSM2.

It is found in the early endosome. The protein localises to the late endosome. The protein resides in the cytoplasmic vesicle membrane. It localises to the lysosome. Its subcellular location is the cell membrane. It is found in the melanosome. The protein localises to the cytoplasmic vesicle. In terms of biological role, may be a guanine exchange factor (GEF) for Rab21, Rab32 and Rab38 and regulate endosome dynamics. May regulate the participation of VAMP7 in membrane fusion events; in vitro inhibits VAMP7-mediated SNARE complex formation by trapping VAMP7 in a closed, fusogenically inactive conformation. Involved in peripheral melanosomal distribution of TYRP1 in melanocytes; the function, which probably is implicating vesicle-trafficking, includes cooperation with Rab32, Rab38 and VAMP7. Involved in the regulation of neurite growth; the function seems to require its GEF activity, probably towards Rab21, and VAMP7 but not Rab32/38. Proposed to be involved in Golgi sorting of VAMP7 and transport of VAMP7 vesicles to the cell surface; the function seems to implicate kinesin heavy chain isoform 5 proteins, GOLGA4, RAB21 and MACF1. Required for the colocalization of VAMP7 and Rab21, probably on TGN sites. Involved in GLUT1 endosome-to-plasma membrane trafficking; the function is dependent of association with VPS29. Regulates the proper trafficking of melanogenic enzymes TYR, TYRP1 and DCT/TYRP2 to melanosomes in melanocytes. The polypeptide is Ankyrin repeat domain-containing protein 27 (Ankrd27) (Mus musculus (Mouse)).